A 209-amino-acid polypeptide reads, in one-letter code: Dual-specificity protein phosphatase SDP1 (209 aa).

Residues Met-1 to Pro-11 are compositionally biased toward polar residues. The segment at Met-1 to Glu-43 is disordered. The span at Thr-28 to Glu-43 shows a compositional bias: basic and acidic residues. A disulfide bridge connects residues Cys-47 and Cys-142. The region spanning Gly-59 to Ala-196 is the Tyrosine-protein phosphatase domain. His-111 serves as a coordination point for 4-O-phospho-L-tyrosine. Catalysis depends on Cys-140, which acts as the Phosphocysteine intermediate.

The protein belongs to the protein-tyrosine phosphatase family. Non-receptor class dual specificity subfamily.

It carries out the reaction O-phospho-L-tyrosyl-[protein] + H2O = L-tyrosyl-[protein] + phosphate. Functionally, mediates dephosphorylation of MAPK substrates such as SLT2, acquiring enhanced catalytic activity under oxidative conditions. The protein is Dual-specificity protein phosphatase SDP1 (SDP1) of Saccharomyces cerevisiae (strain ATCC 204508 / S288c) (Baker's yeast).